Reading from the N-terminus, the 293-residue chain is Formamidopyrimidine-DNA glycosylase (293 aa).

Pro-2 (schiff-base intermediate with DNA) is an active-site residue. The Proton donor role is filled by Glu-3. Lys-60 acts as the Proton donor; for beta-elimination activity in catalysis. His-110, Arg-129, and Arg-174 together coordinate DNA. The FPG-type zinc finger occupies 259–293 (NVYRRTGKECRKCGNLIERKKISGRSTHWCPKCQK). Arg-283 acts as the Proton donor; for delta-elimination activity in catalysis.

The protein belongs to the FPG family. As to quaternary structure, monomer. Zn(2+) serves as cofactor.

The catalysed reaction is Hydrolysis of DNA containing ring-opened 7-methylguanine residues, releasing 2,6-diamino-4-hydroxy-5-(N-methyl)formamidopyrimidine.. It catalyses the reaction 2'-deoxyribonucleotide-(2'-deoxyribose 5'-phosphate)-2'-deoxyribonucleotide-DNA = a 3'-end 2'-deoxyribonucleotide-(2,3-dehydro-2,3-deoxyribose 5'-phosphate)-DNA + a 5'-end 5'-phospho-2'-deoxyribonucleoside-DNA + H(+). Its function is as follows. Involved in base excision repair of DNA damaged by oxidation or by mutagenic agents. Acts as a DNA glycosylase that recognizes and removes damaged bases. Has a preference for oxidized purines, such as 7,8-dihydro-8-oxoguanine (8-oxoG). Has AP (apurinic/apyrimidinic) lyase activity and introduces nicks in the DNA strand. Cleaves the DNA backbone by beta-delta elimination to generate a single-strand break at the site of the removed base with both 3'- and 5'-phosphates. This Prochlorococcus marinus (strain MIT 9215) protein is Formamidopyrimidine-DNA glycosylase.